Here is a 121-residue protein sequence, read N- to C-terminus: Large ribosomal subunit protein eL18 (121 aa).

It belongs to the eukaryotic ribosomal protein eL18 family.

The sequence is that of Large ribosomal subunit protein eL18 from Methanoregula boonei (strain DSM 21154 / JCM 14090 / 6A8).